The chain runs to 155 residues: MADKPIAKALRNVLVLHGPNLNLLGTREPEVYGATTLADINTALVERATARGVTLAHFQSNHEGALVDRIHAAKSEGIEFIIINPAAYTHTSVALRDALAGVVIPYIEVHLSNVHRREPFRHHSYLADQAVGVICGLGWRGYLAALDFAIDQHGG.

Catalysis depends on Tyr32, which acts as the Proton acceptor. Residues Asn84, His90, and Asp97 each contribute to the substrate site. His110 (proton donor) is an active-site residue. Substrate is bound by residues 111 to 112 (LS) and Arg121.

It belongs to the type-II 3-dehydroquinase family. Homododecamer.

The enzyme catalyses 3-dehydroquinate = 3-dehydroshikimate + H2O. The protein operates within metabolic intermediate biosynthesis; chorismate biosynthesis; chorismate from D-erythrose 4-phosphate and phosphoenolpyruvate: step 3/7. Catalyzes a trans-dehydration via an enolate intermediate. The chain is 3-dehydroquinate dehydratase from Ralstonia pickettii (strain 12J).